The sequence spans 310 residues: Homoserine kinase (310 aa).

91 to 101 (PIGSGLGSSAC) contacts ATP.

Belongs to the GHMP kinase family. Homoserine kinase subfamily.

The protein resides in the cytoplasm. It carries out the reaction L-homoserine + ATP = O-phospho-L-homoserine + ADP + H(+). It functions in the pathway amino-acid biosynthesis; L-threonine biosynthesis; L-threonine from L-aspartate: step 4/5. Its function is as follows. Catalyzes the ATP-dependent phosphorylation of L-homoserine to L-homoserine phosphate. The sequence is that of Homoserine kinase from Escherichia coli (strain SE11).